The following is a 184-amino-acid chain: Thymidine kinase (184 aa).

Residues 9–16 (AAMNSGKS) and 82–85 (DEAQ) each bind ATP. The Proton acceptor role is filled by Glu-83. Residues Cys-140, Cys-142, Cys-177, and Cys-180 each coordinate Zn(2+).

This sequence belongs to the thymidine kinase family. In terms of assembly, homotetramer.

The protein resides in the cytoplasm. The catalysed reaction is thymidine + ATP = dTMP + ADP + H(+). This is Thymidine kinase from Chromobacterium violaceum (strain ATCC 12472 / DSM 30191 / JCM 1249 / CCUG 213 / NBRC 12614 / NCIMB 9131 / NCTC 9757 / MK).